We begin with the raw amino-acid sequence, 426 residues long: Proline--tRNA ligase (426 aa).

The protein belongs to the class-II aminoacyl-tRNA synthetase family. ProS type 2 subfamily. Homodimer.

It localises to the cytoplasm. The enzyme catalyses tRNA(Pro) + L-proline + ATP = L-prolyl-tRNA(Pro) + AMP + diphosphate. In terms of biological role, catalyzes the attachment of proline to tRNA(Pro) in a two-step reaction: proline is first activated by ATP to form Pro-AMP and then transferred to the acceptor end of tRNA(Pro). This chain is Proline--tRNA ligase, found in Rickettsia rickettsii (strain Iowa).